A 658-amino-acid chain; its full sequence is Integrator complex subunit 9 (658 aa).

K58 is covalently cross-linked (Glycyl lysine isopeptide (Lys-Gly) (interchain with G-Cter in SUMO2)). Positions 548–572 (DNKHVLQPPPKPTQPTSSKKRKRVN) are disordered. Residues 566–570 (KKRKR) carry the Nuclear localization signal motif.

Belongs to the metallo-beta-lactamase superfamily. RNA-metabolizing metallo-beta-lactamase-like family. INTS9 subfamily. Component of the Integrator complex, composed of core subunits INTS1, INTS2, INTS3, INTS4, INTS5, INTS6, INTS7, INTS8, INTS9/RC74, INTS10, INTS11/CPSF3L, INTS12, INTS13, INTS14 and INTS15. The core complex associates with protein phosphatase 2A subunits PPP2CA and PPP2R1A, to form the Integrator-PP2A (INTAC) complex. INTS9 is part of the RNA endonuclease subcomplex, composed of INTS4, INTS9, INTS11 and inositol hexakisphosphate (InsP6). Interacts with WDR73; interaction is required for the assembly of the RNA endonuclease subcomplex in the cytoplasm. Interacts with BRAT1; interaction is required for the assembly of the RNA endonuclease subcomplex. Interacts with ESRRB, ESRRB is not a core component of the Integrator complex and this association is a bridge for the interaction with the multiprotein complex Integrator; attracts the transcriptional machinery.

The protein resides in the nucleus. Its subcellular location is the cytoplasm. Component of the integrator complex, a multiprotein complex that terminates RNA polymerase II (Pol II) transcription in the promoter-proximal region of genes. The integrator complex provides a quality checkpoint during transcription elongation by driving premature transcription termination of transcripts that are unfavorably configured for transcriptional elongation: the complex terminates transcription by (1) catalyzing dephosphorylation of the C-terminal domain (CTD) of Pol II subunit POLR2A/RPB1 and SUPT5H/SPT5, (2) degrading the exiting nascent RNA transcript via endonuclease activity and (3) promoting the release of Pol II from bound DNA. The integrator complex is also involved in terminating the synthesis of non-coding Pol II transcripts, such as enhancer RNAs (eRNAs), small nuclear RNAs (snRNAs), telomerase RNAs and long non-coding RNAs (lncRNAs). Mediates recruitment of cytoplasmic dynein to the nuclear envelope, probably as component of the integrator complex. The sequence is that of Integrator complex subunit 9 (Ints9) from Mus musculus (Mouse).